Here is a 349-residue protein sequence, read N- to C-terminus: Interleukin-10 receptor subunit beta (349 aa).

The first 19 residues, 1–19, serve as a signal peptide directing secretion; the sequence is MAPCVAGWLGGFLLVPALG. Residues 20–220 are Extracellular-facing; sequence MIPPPEKVRM…RTGNDEITPS (201 aa). 2 Fibronectin type-III domains span residues 23-111 and 112-215; these read PPEK…VEDT and IIGP…TGND. The N-linked (GlcNAc...) asparagine glycan is linked to Asn49. Residues Cys66 and Cys74 are joined by a disulfide bond. Residues Asn102, Asn161, and Asn199 are each glycosylated (N-linked (GlcNAc...) asparagine). The cysteines at positions 188 and 209 are disulfide-linked. A helical transmembrane segment spans residues 221-241; the sequence is WIVAIILIVSVLVVFLFLLGC. The Cytoplasmic portion of the chain corresponds to 242–349; that stretch reads FVVLWLIYKK…PKLLTSTSEV (108 aa). A Phosphoserine modification is found at Ser299. The interval 300 to 349 is disordered; the sequence is EESEGSKQSPEDNCASEPPSDPGPRELESKDEAPSPPHDDPKLLTSTSEV. Over residues 322 to 341 the composition is skewed to basic and acidic residues; that stretch reads GPRELESKDEAPSPPHDDPK.

The protein belongs to the type II cytokine receptor family. As to quaternary structure, heterodimer with IFNLR1.

Its subcellular location is the membrane. Functionally, shared cell surface receptor required for the activation of five class 2 cytokines: IL10, IL22, IL26, IL28, and IFNL1. The IFNLR1/IL10RB dimer is a receptor for the cytokine ligands IFNL2 and IFNL3 and mediates their antiviral activity. The ligand/receptor complex stimulate the activation of the JAK/STAT signaling pathway leading to the expression of IFN-stimulated genes (ISG), which contribute to the antiviral state. This chain is Interleukin-10 receptor subunit beta (Il10rb), found in Mus musculus (Mouse).